The following is a 320-amino-acid chain: Atrochrysone carboxyl ACP thioesterase (320 aa).

Zn(2+)-binding residues include histidine 103, histidine 105, aspartate 107, and histidine 108. Aspartate 107 serves as the catalytic Proton donor/acceptor.

The protein belongs to the metallo-beta-lactamase superfamily. Zn(2+) serves as cofactor.

It carries out the reaction atrochrysone carboxyl-[ACP] + H2O = atrochrysone carboxylate + holo-[ACP] + H(+). The protein operates within secondary metabolite biosynthesis. Its function is as follows. Atrochrysone carboxyl ACP thioesterase; part of the gene cluster that mediates the biosynthesis of geodin, an intermediate in the biosynthesis of other natural products. The pathway begins with the synthesis of atrochrysone thioester by the polyketide synthase (PKS) gedC. The atrochrysone carboxyl ACP thioesterase gedB then breaks the thioester bond and releases the atrochrysone carboxylic acid from gedC. The atrochrysone carboxylic acid is then converted to atrochrysone which is further transformed into emodinanthrone. The next step is performed by the emodinanthrone oxygenase gedH that catalyzes the oxidation of emodinanthrone to emodin. Emodin O-methyltransferase encoded probably by gedA then catalyzes methylation of the 8-hydroxy group of emodin to form questin. Ring cleavage of questin by questin oxidase gedK leads to desmethylsulochrin via several intermediates including questin epoxide. Another methylation step probably catalyzed by methyltransferase gedG leads to the formation of sulochrin which is further converted to dihydrogeodin by the sulochrin halogenase gedL. Finally, the dihydrogeodin oxidase gedJ catalyzes the stereospecific phenol oxidative coupling reaction converting dihydrogeodin to geodin. The protein is Atrochrysone carboxyl ACP thioesterase of Aspergillus terreus (strain NIH 2624 / FGSC A1156).